The sequence spans 244 residues: Small ribosomal subunit protein uS2 (244 aa).

This sequence belongs to the universal ribosomal protein uS2 family.

This is Small ribosomal subunit protein uS2 from Endomicrobium trichonymphae.